Consider the following 104-residue polypeptide: DNA-directed RNA polymerase subunit omega (104 aa).

It belongs to the RNA polymerase subunit omega family. As to quaternary structure, the RNAP catalytic core consists of 2 alpha, 1 beta, 1 beta' and 1 omega subunit. When a sigma factor is associated with the core the holoenzyme is formed, which can initiate transcription.

The catalysed reaction is RNA(n) + a ribonucleoside 5'-triphosphate = RNA(n+1) + diphosphate. Promotes RNA polymerase assembly. Latches the N- and C-terminal regions of the beta' subunit thereby facilitating its interaction with the beta and alpha subunits. This chain is DNA-directed RNA polymerase subunit omega, found in Streptococcus agalactiae serotype Ia (strain ATCC 27591 / A909 / CDC SS700).